Consider the following 444-residue polypeptide: Vacuolar protein sorting-associated protein 4B (444 aa).

Positions T4 to K82 constitute an MIT domain. A coiled-coil region spans residues A19–K82. The segment at K77–N118 is disordered. Basic and acidic residues predominate over residues P86–D101. S102 and S108 each carry phosphoserine. G174–S181 serves as a coordination point for ATP. S410 carries the phosphoserine modification.

This sequence belongs to the AAA ATPase family. In terms of assembly, proposed to be monomeric or homodimeric in nucleotide-free form and to oligomerize upon binding to ATP to form two stacked hexameric or heptameric rings with a central pore through which ESCRT-III substrates are translocated in an ATP-dependent manner. In vitro, associates on the inside of a helical tubular structure formed by a CHMP2A-CHMP3 polymer. Interacts with CHMP1A, CHMP1B, CHMP4B and CHMP6. Interacts with CHMP2A. Interacts with VPS4A; the interaction suggests a heteromeric assembly with VPS4A. Interacts with VTA1. As to expression, high level expression seen in the kidney. It is also expressed in the heart, brain, spleen, lung, liver, skeletal muscle, and testis.

The protein localises to the late endosome membrane. It carries out the reaction ATP + H2O = ADP + phosphate + H(+). Involved in late steps of the endosomal multivesicular bodies (MVB) pathway. Recognizes membrane-associated ESCRT-III assemblies and catalyzes their disassembly, possibly in combination with membrane fission. Redistributes the ESCRT-III components to the cytoplasm for further rounds of MVB sorting. MVBs contain intraluminal vesicles (ILVs) that are generated by invagination and scission from the limiting membrane of the endosome and mostly are delivered to lysosomes enabling degradation of membrane proteins, such as stimulated growth factor receptors, lysosomal enzymes and lipids. VPS4A/B are required for the exosomal release of SDCBP, CD63 and syndecan. Functionally, (Microbial infection) In conjunction with the ESCRT machinery also appears to function in topologically equivalent membrane fission events, such as the terminal stages of cytokinesis and enveloped virus budding (lentiviruses). This chain is Vacuolar protein sorting-associated protein 4B, found in Mus musculus (Mouse).